Here is a 166-residue protein sequence, read N- to C-terminus: RNA pyrophosphohydrolase (166 aa).

One can recognise a Nudix hydrolase domain in the interval 8 to 158 (PYRSCVGMML…KRPVYERVVK (151 aa)). A Nudix box motif is present at residues 47–68 (GGIDPGEDYWEAAQRELLEETN).

This sequence belongs to the Nudix hydrolase family. RppH subfamily. A divalent metal cation is required as a cofactor.

Accelerates the degradation of transcripts by removing pyrophosphate from the 5'-end of triphosphorylated RNA, leading to a more labile monophosphorylated state that can stimulate subsequent ribonuclease cleavage. The polypeptide is RNA pyrophosphohydrolase (Afipia carboxidovorans (strain ATCC 49405 / DSM 1227 / KCTC 32145 / OM5) (Oligotropha carboxidovorans)).